The primary structure comprises 98 residues: NADH-ubiquinone oxidoreductase chain 4L (98 aa).

3 consecutive transmembrane segments (helical) span residues 1 to 21 (MPSI…GMLV), 29 to 49 (SLLC…LTAL), and 61 to 81 (IILL…LVMV).

This sequence belongs to the complex I subunit 4L family. Core subunit of respiratory chain NADH dehydrogenase (Complex I) which is composed of 45 different subunits.

The protein resides in the mitochondrion inner membrane. The enzyme catalyses a ubiquinone + NADH + 5 H(+)(in) = a ubiquinol + NAD(+) + 4 H(+)(out). Its function is as follows. Core subunit of the mitochondrial membrane respiratory chain NADH dehydrogenase (Complex I) which catalyzes electron transfer from NADH through the respiratory chain, using ubiquinone as an electron acceptor. Part of the enzyme membrane arm which is embedded in the lipid bilayer and involved in proton translocation. The sequence is that of NADH-ubiquinone oxidoreductase chain 4L (MT-ND4L) from Oryctolagus cuniculus (Rabbit).